We begin with the raw amino-acid sequence, 90 residues long: Probable Fe(2+)-trafficking protein (90 aa).

The protein belongs to the Fe(2+)-trafficking protein family.

Functionally, could be a mediator in iron transactions between iron acquisition and iron-requiring processes, such as synthesis and/or repair of Fe-S clusters in biosynthetic enzymes. The chain is Probable Fe(2+)-trafficking protein from Azotobacter vinelandii (strain DJ / ATCC BAA-1303).